Reading from the N-terminus, the 340-residue chain is Anthranilate phosphoribosyltransferase (340 aa).

Residues Gly80, 83–84, Thr88, 90–93, 108–116, and Ser120 contribute to the 5-phospho-alpha-D-ribose 1-diphosphate site; these read GD, NIST, and KHGNRAMSS. An anthranilate-binding site is contributed by Gly80. Ser92 serves as a coordination point for Mg(2+). An anthranilate-binding site is contributed by Asn111. Arg166 serves as a coordination point for anthranilate. The Mg(2+) site is built by Asp225 and Glu226.

This sequence belongs to the anthranilate phosphoribosyltransferase family. As to quaternary structure, homodimer. Mg(2+) is required as a cofactor.

It catalyses the reaction N-(5-phospho-beta-D-ribosyl)anthranilate + diphosphate = 5-phospho-alpha-D-ribose 1-diphosphate + anthranilate. Its pathway is amino-acid biosynthesis; L-tryptophan biosynthesis; L-tryptophan from chorismate: step 2/5. Functionally, catalyzes the transfer of the phosphoribosyl group of 5-phosphorylribose-1-pyrophosphate (PRPP) to anthranilate to yield N-(5'-phosphoribosyl)-anthranilate (PRA). In Roseiflexus castenholzii (strain DSM 13941 / HLO8), this protein is Anthranilate phosphoribosyltransferase.